The primary structure comprises 286 residues: 2,3,4,5-tetrahydropyridine-2,6-dicarboxylate N-succinyltransferase (286 aa).

The protein belongs to the transferase hexapeptide repeat family.

It localises to the cytoplasm. The enzyme catalyses (S)-2,3,4,5-tetrahydrodipicolinate + succinyl-CoA + H2O = (S)-2-succinylamino-6-oxoheptanedioate + CoA. It functions in the pathway amino-acid biosynthesis; L-lysine biosynthesis via DAP pathway; LL-2,6-diaminopimelate from (S)-tetrahydrodipicolinate (succinylase route): step 1/3. The protein is 2,3,4,5-tetrahydropyridine-2,6-dicarboxylate N-succinyltransferase of Rhizobium leguminosarum bv. trifolii (strain WSM2304).